Consider the following 279-residue polypeptide: Putative ABC transporter ATP-binding protein CA_C1368 (279 aa).

Positions 4–239 constitute an ABC transporter domain; the sequence is ISINNVDYIY…KKVLRNINLR (236 aa). An ATP-binding site is contributed by 37-44; the sequence is GPNGAGKS.

This sequence belongs to the ABC transporter superfamily.

The protein resides in the cell membrane. Its function is as follows. Probably part of an ABC transporter complex. Responsible for energy coupling to the transport system. The chain is Putative ABC transporter ATP-binding protein CA_C1368 from Clostridium acetobutylicum (strain ATCC 824 / DSM 792 / JCM 1419 / IAM 19013 / LMG 5710 / NBRC 13948 / NRRL B-527 / VKM B-1787 / 2291 / W).